The sequence spans 109 residues: Putative antitoxin HigA3 (109 aa).

The region spanning 41–97 (LAEIRKALGHARQADVAALMGVSQARVSKLESGDLSHTELGTLQAYVAALGGHLRIV) is the HTH cro/C1-type domain. The H-T-H motif DNA-binding region spans 53–72 (QADVAALMGVSQARVSKLES).

In terms of biological role, putative antitoxin component of a type II toxin-antitoxin (TA) system. Its cognate toxin would be HigB3. The chain is Putative antitoxin HigA3 from Mycobacterium tuberculosis (strain ATCC 25618 / H37Rv).